The sequence spans 637 residues: DNA mismatch repair protein MutL (637 aa).

Disordered regions lie at residues 352 to 384 and 405 to 430; these read DDFT…NVLF and ASVE…AMEQ.

The protein belongs to the DNA mismatch repair MutL/HexB family.

Functionally, this protein is involved in the repair of mismatches in DNA. It is required for dam-dependent methyl-directed DNA mismatch repair. May act as a 'molecular matchmaker', a protein that promotes the formation of a stable complex between two or more DNA-binding proteins in an ATP-dependent manner without itself being part of a final effector complex. The polypeptide is DNA mismatch repair protein MutL (Halalkalibacterium halodurans (strain ATCC BAA-125 / DSM 18197 / FERM 7344 / JCM 9153 / C-125) (Bacillus halodurans)).